Here is a 403-residue protein sequence, read N- to C-terminus: 5,7-dihydroxy-2-methylchromone synthase (403 aa).

Histidine 68 provides a ligand contact to CoA. Cysteine 174 is an active-site residue. The residue at position 174 (cysteine 174) is a Cysteine sulfinic acid (-SO2H). Residues leucine 277, serine 281, and 318–321 (GGRA) each bind CoA.

The protein belongs to the thiolase-like superfamily. Chalcone/stilbene synthases family. As to quaternary structure, homodimer.

It carries out the reaction 5 malonyl-CoA + 4 H(+) = 5,7-dihydroxy-2-methyl-4H-chromen-4-one + 5 CO2 + 5 CoA + H2O. It participates in secondary metabolite biosynthesis; flavonoid biosynthesis. Its function is as follows. Catalyzes the iterative condensations of 5 molecules of malonyl-CoA to produce a pentaketide 5,7-dihydroxy-2-methylchromone. In Aloe arborescens (Kidachi aloe), this protein is 5,7-dihydroxy-2-methylchromone synthase.